The following is a 689-amino-acid chain: DNA-directed RNA polymerase subunit beta' (689 aa).

Zn(2+) is bound by residues C69, C71, C87, and C90. Mg(2+) is bound by residues D489, D491, and D493.

This sequence belongs to the RNA polymerase beta' chain family. RpoC1 subfamily. As to quaternary structure, in plastids the minimal PEP RNA polymerase catalytic core is composed of four subunits: alpha, beta, beta', and beta''. When a (nuclear-encoded) sigma factor is associated with the core the holoenzyme is formed, which can initiate transcription. The cofactor is Mg(2+). It depends on Zn(2+) as a cofactor.

Its subcellular location is the plastid. It localises to the chloroplast. The catalysed reaction is RNA(n) + a ribonucleoside 5'-triphosphate = RNA(n+1) + diphosphate. DNA-dependent RNA polymerase catalyzes the transcription of DNA into RNA using the four ribonucleoside triphosphates as substrates. This is DNA-directed RNA polymerase subunit beta' from Lactuca sativa (Garden lettuce).